Here is a 467-residue protein sequence, read N- to C-terminus: DNA methyltransferase 1-associated protein 1 (467 aa).

Composition is skewed to basic and acidic residues over residues 1–11 (MATGADVRDIL) and 26–48 (SKKDIINPDKKKSKKSSETLTFK). The disordered stretch occupies residues 1 to 48 (MATGADVRDILELGGPEGDAASGTISKKDIINPDKKKSKKSSETLTFK). Residue lysine 27 forms a Glycyl lysine isopeptide (Lys-Gly) (interchain with G-Cter in SUMO2) linkage. The 51-residue stretch at 149–199 (DDAWTKAETDHLFDLSRRFDLRFVVIHDRYDHQQFKKRSVEDLKERYYHIC) folds into the SANT domain. A Glycyl lysine isopeptide (Lys-Gly) (interchain with G-Cter in SUMO2) cross-link involves residue lysine 214. Positions 225–275 (RRKEQLERLYNRTPEQVAEEEYLLQELRKIEARKKEREKRSQDLQKLITAA) form a coiled coil. Over residues 258–267 (KKEREKRSQD) the composition is skewed to basic and acidic residues. Disordered regions lie at residues 258 to 305 (KKER…PAVP) and 404 to 467 (LGGP…AKKP). The span at 406–422 (GPATPASGPGPASAEPA) shows a compositional bias: low complexity. The residue at position 445 (threonine 445) is a Phosphothreonine. Position 448 is a phosphoserine (serine 448).

As to quaternary structure, component of the NuA4 histone acetyltransferase complex which contains the catalytic subunit KAT5/TIP60 and the subunits EP400, TRRAP/PAF400, BRD8/SMAP, EPC1, DMAP1/DNMAP1, RUVBL1/TIP49, RUVBL2, ING3, actin, ACTL6A/BAF53A, MORF4L1/MRG15, MORF4L2/MRGX, MRGBP, YEATS4/GAS41, VPS72/YL1 and MEAF6. Component of a NuA4-related complex which contains EP400, TRRAP/PAF400, SRCAP, BRD8/SMAP, EPC1, DMAP1/DNMAP1, RUVBL1/TIP49, RUVBL2, actin, ACTL6A/BAF53A, VPS72 and YEATS4/GAS41. DMAP1 also forms a complex with DNMT1 and HDAC2. Throughout S phase it interacts directly with the N-terminus of DNMT1, which serves to recruit DMAP1 to replication foci. DMAP1 interacts with ING1, a component of the mSin3A transcription repressor complex, although this interaction is not required for recruitment of ING1 to heterochromatin. Interacts directly with the transcriptional corepressor TSG101. Interacts with the pro-apoptotic protein DAXX. Interacts with URI1.

It is found in the nucleus. The protein localises to the cytoplasm. Involved in transcription repression and activation. Its interaction with HDAC2 may provide a mechanism for histone deacetylation in heterochromatin following replication of DNA at late firing origins. Can also repress transcription independently of histone deacetylase activity. May specifically potentiate DAXX-mediated repression of glucocorticoid receptor-dependent transcription. Component of the NuA4 histone acetyltransferase (HAT) complex which is involved in transcriptional activation of select genes principally by acetylation of nucleosomal histones H4 and H2A. This modification may both alter nucleosome - DNA interactions and promote interaction of the modified histones with other proteins which positively regulate transcription. This complex may be required for the activation of transcriptional programs associated with oncogene and proto-oncogene mediated growth induction, tumor suppressor mediated growth arrest and replicative senescence, apoptosis, and DNA repair. NuA4 may also play a direct role in DNA repair when recruited to sites of DNA damage. Participates in the nuclear localization of URI1 and increases its transcriptional corepressor activity. This chain is DNA methyltransferase 1-associated protein 1 (DMAP1), found in Homo sapiens (Human).